The sequence spans 328 residues: Nickel import system permease protein NikB (328 aa).

A run of 6 helical transmembrane segments spans residues 11 to 31, 104 to 124, 139 to 159, 170 to 190, 229 to 249, and 279 to 299; these read LMQMIVVLFVISTLTFILMKL, LLISFSTLVVSLCISIPLGII, VISTLSISLPAFFIGIILLFI, ILSQFILPVITLSLGMCAYII, ILPIIPLLGISLGSLIGGTVV, and VLFIGFFVVIINTIADLLTLL. In terms of domain architecture, ABC transmembrane type-1 spans 100–297; the sequence is APITLLISFS…IINTIADLLT (198 aa).

Belongs to the binding-protein-dependent transport system permease family. OppBC subfamily. In terms of assembly, the complex is composed of two ATP-binding proteins (NikD and NikE), two transmembrane proteins (NikB and NikC) and a solute-binding protein (NikA).

The protein localises to the cell membrane. Functionally, part of the ABC transporter complex NikABCDE (Opp2) involved in nickel import. Probably responsible for the translocation of the substrate across the membrane. The sequence is that of Nickel import system permease protein NikB from Staphylococcus aureus (strain MSSA476).